The following is a 485-amino-acid chain: Glutamate--tRNA ligase (485 aa).

The 'HIGH' region motif lies at 10-20 (PSPTGHLHIGN). Positions 253 to 257 (KLSKR) match the 'KMSKS' region motif. Residue K256 coordinates ATP.

This sequence belongs to the class-I aminoacyl-tRNA synthetase family. Glutamate--tRNA ligase type 1 subfamily. In terms of assembly, monomer.

It is found in the cytoplasm. The enzyme catalyses tRNA(Glu) + L-glutamate + ATP = L-glutamyl-tRNA(Glu) + AMP + diphosphate. Catalyzes the attachment of glutamate to tRNA(Glu) in a two-step reaction: glutamate is first activated by ATP to form Glu-AMP and then transferred to the acceptor end of tRNA(Glu). This chain is Glutamate--tRNA ligase, found in Enterococcus faecalis (strain ATCC 700802 / V583).